We begin with the raw amino-acid sequence, 93 residues long: Small ribosomal subunit protein bS20c (93 aa).

This sequence belongs to the bacterial ribosomal protein bS20 family.

It is found in the plastid. Its subcellular location is the chloroplast. Its function is as follows. Binds directly to 16S ribosomal RNA. The sequence is that of Small ribosomal subunit protein bS20c from Phaeodactylum tricornutum (strain CCAP 1055/1).